We begin with the raw amino-acid sequence, 555 residues long: Suppressor of tumorigenicity 7 protein-like (555 aa).

The next 4 membrane-spanning stretches (helical) occupy residues 32–52, 76–96, 504–524, and 531–551; these read APWA…YAAL, FYFA…VFEW, LPFF…LALL, and LMVV…APSV.

This sequence belongs to the ST7 family.

The protein resides in the membrane. The protein is Suppressor of tumorigenicity 7 protein-like (ST7L) of Gallus gallus (Chicken).